Here is a 451-residue protein sequence, read N- to C-terminus: UPF0210 protein CLL_A1718 (451 aa).

Belongs to the UPF0210 family. As to quaternary structure, homodimer.

This is UPF0210 protein CLL_A1718 from Clostridium botulinum (strain Eklund 17B / Type B).